The chain runs to 98 residues: NADH-ubiquinone oxidoreductase chain 4L (98 aa).

Transmembrane regions (helical) follow at residues 1–21, 29–49, and 59–79; these read MSLV…GLLM, ALLC…ITIL, and TPII…ALLV.

Belongs to the complex I subunit 4L family. In terms of assembly, core subunit of respiratory chain NADH dehydrogenase (Complex I) which is composed of 45 different subunits.

It localises to the mitochondrion inner membrane. It carries out the reaction a ubiquinone + NADH + 5 H(+)(in) = a ubiquinol + NAD(+) + 4 H(+)(out). Core subunit of the mitochondrial membrane respiratory chain NADH dehydrogenase (Complex I) which catalyzes electron transfer from NADH through the respiratory chain, using ubiquinone as an electron acceptor. Part of the enzyme membrane arm which is embedded in the lipid bilayer and involved in proton translocation. This is NADH-ubiquinone oxidoreductase chain 4L (MT-ND4L) from Lipotes vexillifer (Yangtze river dolphin).